The primary structure comprises 323 residues: Olfactory receptor 2T35 (323 aa).

The Extracellular segment spans residues 1 to 26 (MGMEGLLQNSTNFVLTGLITHPAFPG). N-linked (GlcNAc...) asparagine glycosylation is present at Asn-9. A helical membrane pass occupies residues 27–50 (LLFAVVFSIFVVAITANLVMILLI). Topologically, residues 51–58 (HMDSRLHT) are cytoplasmic. The helical transmembrane segment at 59–80 (PMYFLLSQLSIMDTIYICITVP) threads the bilayer. Topologically, residues 81 to 101 (KMLQDLLSKDKTISFLGCAVQ) are extracellular. The cysteines at positions 98 and 189 are disulfide-linked. The chain crosses the membrane as a helical span at residues 102-120 (IFYLTLIGGEFFLLGLMAY). The Cytoplasmic segment spans residues 121 to 139 (DRYVAVCNPLRYPLLMNRR). The helical transmembrane segment at 140–158 (VCLFMVVGSWVGGSLDGFM) threads the bilayer. The Extracellular segment spans residues 159–195 (LTPVTMSFPFCRSREINHFFCEIPAVLKLSCTDTSLY). A helical transmembrane segment spans residues 196–219 (ETLMYACCVLMLLIPLSVISVSYT). The Cytoplasmic portion of the chain corresponds to 220–236 (HILLTVHRMNSAEGRRK). Residues 237-259 (AFATCSSHIMVVSVFYGAAFYTN) form a helical membrane-spanning segment. The Extracellular segment spans residues 260–272 (VLPHSYHTPEKDK). The helical transmembrane segment at 273–292 (VVSAFYTILTPMLNPLIYSL) threads the bilayer. The Cytoplasmic segment spans residues 293–323 (RNKDVAAALRKVLGRCGSSQSIRVATVIRKG).

The protein belongs to the G-protein coupled receptor 1 family.

It localises to the cell membrane. In terms of biological role, odorant receptor. The protein is Olfactory receptor 2T35 (OR2T35) of Homo sapiens (Human).